A 258-amino-acid polypeptide reads, in one-letter code: Phosphate import ATP-binding protein PstB (258 aa).

The 243-residue stretch at 5–247 folds into the ABC transporter domain; it reads LDLKDVNIYY…EKIFSNPRQK (243 aa). ATP is bound at residue 37-44; the sequence is GPSGCGKS.

Belongs to the ABC transporter superfamily. Phosphate importer (TC 3.A.1.7) family. The complex is composed of two ATP-binding proteins (PstB), two transmembrane proteins (PstC and PstA) and a solute-binding protein (PstS).

The protein localises to the cell membrane. The catalysed reaction is phosphate(out) + ATP + H2O = ADP + 2 phosphate(in) + H(+). Part of the ABC transporter complex PstSACB involved in phosphate import. Responsible for energy coupling to the transport system. This is Phosphate import ATP-binding protein PstB from Mycolicibacterium smegmatis (Mycobacterium smegmatis).